The chain runs to 61 residues: MFPLKKSLLLLFFLATINLSLCEQERNAEEERRDEPDERNAEVEKRFFPIVGKLLSGLLGK.

The first 22 residues, 1 to 22 (MFPLKKSLLLLFFLATINLSLC), serve as a signal peptide directing secretion. A propeptide spanning residues 23-46 (EQERNAEEERRDEPDERNAEVEKR) is cleaved from the precursor. Leu-59 carries the post-translational modification Leucine amide.

It belongs to the frog skin active peptide (FSAP) family. Temporin subfamily. As to expression, expressed by the skin glands.

Its subcellular location is the secreted. Antimicrobial peptide with activity against Gram-positive and Gram-negative bacteria and against fungi. Has been tested against S.aureus (MIC=7.5 ug/mL), B.pumilus (MIC=7.5 ug/mL), B.cereus (MIC=75.0 ug/mL), E.coli (MIC=7.5 ug/mL), B.dysenteriae (MIC=20.0 ug/mL), A.cacoaceticus (MIC=60.0 ug/mL), P.aeruginosa (MIC=5.0 ug/mL) and C.albicans (MIC=5.0 ug/mL). Also shows a weak hemolytic activity. The protein is Temporin-ALi of Amolops loloensis (Lolokou Sucker Frog).